An 86-amino-acid polypeptide reads, in one-letter code: Cell division topological specificity factor (86 aa).

Belongs to the MinE family.

Functionally, prevents the cell division inhibition by proteins MinC and MinD at internal division sites while permitting inhibition at polar sites. This ensures cell division at the proper site by restricting the formation of a division septum at the midpoint of the long axis of the cell. This is Cell division topological specificity factor from Shewanella woodyi (strain ATCC 51908 / MS32).